The following is a 211-amino-acid chain: Large ribosomal subunit protein uL4 (211 aa).

Residues 41 to 87 (QAHARQGTASTLTRSEVRGGGRKPYKQKGTGRARQGSIRTPLRPGGG) form a disordered region. The span at 60–71 (GGRKPYKQKGTG) shows a compositional bias: basic residues.

The protein belongs to the universal ribosomal protein uL4 family. As to quaternary structure, part of the 50S ribosomal subunit.

One of the primary rRNA binding proteins, this protein initially binds near the 5'-end of the 23S rRNA. It is important during the early stages of 50S assembly. It makes multiple contacts with different domains of the 23S rRNA in the assembled 50S subunit and ribosome. In terms of biological role, forms part of the polypeptide exit tunnel. This Parasynechococcus marenigrum (strain WH8102) protein is Large ribosomal subunit protein uL4.